A 341-amino-acid chain; its full sequence is Phenylalanine--tRNA ligase alpha subunit (341 aa).

A Mg(2+)-binding site is contributed by E254.

Belongs to the class-II aminoacyl-tRNA synthetase family. Phe-tRNA synthetase alpha subunit type 1 subfamily. As to quaternary structure, tetramer of two alpha and two beta subunits. Mg(2+) serves as cofactor.

The protein resides in the cytoplasm. It carries out the reaction tRNA(Phe) + L-phenylalanine + ATP = L-phenylalanyl-tRNA(Phe) + AMP + diphosphate + H(+). This Chlorobium limicola (strain DSM 245 / NBRC 103803 / 6330) protein is Phenylalanine--tRNA ligase alpha subunit.